We begin with the raw amino-acid sequence, 159 residues long: Ribosome maturation factor RimP (159 aa).

The protein belongs to the RimP family.

The protein localises to the cytoplasm. Required for maturation of 30S ribosomal subunits. This chain is Ribosome maturation factor RimP, found in Geotalea daltonii (strain DSM 22248 / JCM 15807 / FRC-32) (Geobacter daltonii).